The following is a 212-amino-acid chain: N-(5'-phosphoribosyl)anthranilate isomerase (212 aa).

Belongs to the TrpF family.

The catalysed reaction is N-(5-phospho-beta-D-ribosyl)anthranilate = 1-(2-carboxyphenylamino)-1-deoxy-D-ribulose 5-phosphate. Its pathway is amino-acid biosynthesis; L-tryptophan biosynthesis; L-tryptophan from chorismate: step 3/5. The polypeptide is N-(5'-phosphoribosyl)anthranilate isomerase (Roseiflexus castenholzii (strain DSM 13941 / HLO8)).